The chain runs to 192 residues: Thymidine kinase (192 aa).

Residues Ala-9–Ser-16 and Asp-87–Gln-90 contribute to the ATP site. Glu-88 acts as the Proton acceptor in catalysis. Cys-145, Cys-147, Cys-182, and His-185 together coordinate Zn(2+).

The protein belongs to the thymidine kinase family. As to quaternary structure, homotetramer.

It localises to the cytoplasm. It carries out the reaction thymidine + ATP = dTMP + ADP + H(+). This chain is Thymidine kinase, found in Novosphingobium aromaticivorans (strain ATCC 700278 / DSM 12444 / CCUG 56034 / CIP 105152 / NBRC 16084 / F199).